A 326-amino-acid chain; its full sequence is tRNA-modifying protein YgfZ (326 aa).

The folate site is built by W27 and W189.

This sequence belongs to the tRNA-modifying YgfZ family.

Its subcellular location is the cytoplasm. Its function is as follows. Folate-binding protein involved in regulating the level of ATP-DnaA and in the modification of some tRNAs. It is probably a key factor in regulatory networks that act via tRNA modification, such as initiation of chromosomal replication. This Escherichia coli O17:K52:H18 (strain UMN026 / ExPEC) protein is tRNA-modifying protein YgfZ.